The chain runs to 443 residues: Histone deacetylase 10, chloroplastic (443 aa).

The transit peptide at 1–65 (MEQLWVPSLP…PSHNGTSISD (65 aa)) directs the protein to the chloroplast. Positions 82–412 (DAHILYCTSP…FRAFLGEPSL (331 aa)) are histone deacetylase. His-222 serves as the catalytic Proton donor/acceptor. Zn(2+) contacts are provided by Asp-259, His-261, and Asp-346.

The protein belongs to the histone deacetylase family. The cofactor is Zn(2+). As to expression, expressed in leaves. Expressed in coleoptiles, leaves, flag leaves and flowers. Expressed at low levels in roots.

The protein resides in the plastid. The protein localises to the chloroplast. It is found in the mitochondrion. It carries out the reaction N-acetylserotonin + H2O = serotonin + acetate. The catalysed reaction is N-acetyltyramine + H2O = tyramine + acetate. It catalyses the reaction N-acetyltryptamine + H2O = tryptamine + acetate. The enzyme catalyses melatonin + H2O = 5-methoxytryptamine + acetate. With respect to regulation, the activity of this enzyme is not inhibited by butyrate, a well-known histone deacetylase inhibitor. Involved in the regulation of melatonin biosynthesis by catalyzing the deacetylation of N-acetylserotonin to produce serotonin. N-acetylserotonin is methylated by acetylserotonin O-methyltransferase (ASMT) to produce melatonin (N-acetyl-5-methoxytryptamine). Deacetylates melatonin to produce 5-methoxytryptamine. In vitro, deacetylates N-acetyltyramine and N-acetyltryptamine to produce tyramine and tryptamine, respectively. The polypeptide is Histone deacetylase 10, chloroplastic (Oryza sativa subsp. japonica (Rice)).